The following is a 342-amino-acid chain: Glyceraldehyde-3-phosphate dehydrogenase (342 aa).

NAD(+)-binding positions include Arg12–Ile13, Asp34, Lys78, and Thr120. Residues Ser151 to Thr153 and Thr182 each bind D-glyceraldehyde 3-phosphate. Cys152 serves as the catalytic Nucleophile. Asn183 serves as a coordination point for NAD(+). Residues Arg197, Thr210–Gly211, and Arg233 each bind D-glyceraldehyde 3-phosphate. Asn322 serves as a coordination point for NAD(+).

This sequence belongs to the glyceraldehyde-3-phosphate dehydrogenase family. In terms of assembly, homotetramer.

The protein resides in the cytoplasm. The enzyme catalyses D-glyceraldehyde 3-phosphate + phosphate + NAD(+) = (2R)-3-phospho-glyceroyl phosphate + NADH + H(+). It participates in carbohydrate degradation; glycolysis; pyruvate from D-glyceraldehyde 3-phosphate: step 1/5. Its function is as follows. Catalyzes the oxidative phosphorylation of glyceraldehyde 3-phosphate (G3P) to 1,3-bisphosphoglycerate (BPG) using the cofactor NAD. The first reaction step involves the formation of a hemiacetal intermediate between G3P and a cysteine residue, and this hemiacetal intermediate is then oxidized to a thioester, with concomitant reduction of NAD to NADH. The reduced NADH is then exchanged with the second NAD, and the thioester is attacked by a nucleophilic inorganic phosphate to produce BPG. The chain is Glyceraldehyde-3-phosphate dehydrogenase (gap) from Aquifex aeolicus (strain VF5).